A 120-amino-acid chain; its full sequence is Large ribosomal subunit protein uL18 (120 aa).

This sequence belongs to the universal ribosomal protein uL18 family. Part of the 50S ribosomal subunit; part of the 5S rRNA/L5/L18/L25 subcomplex. Contacts the 5S and 23S rRNAs.

This is one of the proteins that bind and probably mediate the attachment of the 5S RNA into the large ribosomal subunit, where it forms part of the central protuberance. The protein is Large ribosomal subunit protein uL18 of Exiguobacterium sp. (strain ATCC BAA-1283 / AT1b).